A 661-amino-acid chain; its full sequence is UvrABC system protein B (661 aa).

One can recognise a Helicase ATP-binding domain in the interval 25-182 (KGLNNKKRSQ…NDLVNLQYER (158 aa)). Position 38–45 (38–45 (GITGSGKT)) interacts with ATP. The short motif at 91–114 (YYDYYQPEAYIPKTDVFIEKDSSI) is the Beta-hairpin element. The Helicase C-terminal domain occupies 430 to 592 (QVEDLVGEIQ…IIPKTINRTI (163 aa)). Residues 621–656 (KAHIDKLRKEMLKAASNLEFEQAAKLRDQLKTLEEA) enclose the UVR domain.

It belongs to the UvrB family. Forms a heterotetramer with UvrA during the search for lesions. Interacts with UvrC in an incision complex.

Its subcellular location is the cytoplasm. The UvrABC repair system catalyzes the recognition and processing of DNA lesions. A damage recognition complex composed of 2 UvrA and 2 UvrB subunits scans DNA for abnormalities. Upon binding of the UvrA(2)B(2) complex to a putative damaged site, the DNA wraps around one UvrB monomer. DNA wrap is dependent on ATP binding by UvrB and probably causes local melting of the DNA helix, facilitating insertion of UvrB beta-hairpin between the DNA strands. Then UvrB probes one DNA strand for the presence of a lesion. If a lesion is found the UvrA subunits dissociate and the UvrB-DNA preincision complex is formed. This complex is subsequently bound by UvrC and the second UvrB is released. If no lesion is found, the DNA wraps around the other UvrB subunit that will check the other stand for damage. The sequence is that of UvrABC system protein B from Rickettsia bellii (strain RML369-C).